The chain runs to 396 residues: (S)-8-oxocitronellyl enol synthase ISY2 (396 aa).

NADP(+) contacts are provided by residues Thr-38–Leu-40, Arg-66–Arg-67, Asp-84–Val-85, Thr-108–Trp-109, Gln-146, Tyr-182, Ile-209, and Ser-216–Met-218. Tyr-182 is a catalytic residue.

This sequence belongs to the short-chain dehydrogenases/reductases (SDR) family.

The enzyme catalyses (S)-8-oxocitronellyl enol + NADP(+) = (6E)-8-oxogeranial + NADPH + H(+). It carries out the reaction (S)-8-oxocitronellyl enol + NAD(+) = (6E)-8-oxogeranial + NADH + H(+). Iridoid synthase that catalyzes the first step in generation of the iridoid ring scaffold using the linear monoterpene (6E)-8-oxogeranial as substrate. Iridoids comprise a large family of distinctive bicyclic monoterpenes that possess a wide range of pharmacological activities, including anticancer, anti-inflammatory, antifungal and antibacterial activities. Catalyzes the conversion of the linear monoterpene (6E)-8-oxogeranial to (S)-8-oxocitronellyl enol, a precursor of nepetalactones, which are metabolites that are both insect-repellent and have euphoric effect in cats. In Nepeta racemosa (Catmint), this protein is (S)-8-oxocitronellyl enol synthase ISY2.